We begin with the raw amino-acid sequence, 40 residues long: RapK inhibitor (40 aa).

2 consecutive propeptides follow at residues 1–34 (MKKL…IQVA) and Gly-40.

This sequence belongs to the Phr family. In terms of processing, contains a predicted signal peptide cleavage site in the N-terminal region, however the propeptide is probably only subject to processing events at the ends of the mature peptide.

Its subcellular location is the secreted. The protein resides in the cytoplasm. In terms of biological role, signaling molecule involved in the regulation of genetic competence development. Secreted during production, but the mature peptide acts intracellularly, indicating that it needs to be imported into the cell to function. Stimulates expression of the genes controlled by ComA, a transcriptional factor that regulates the development of genetic competence. Acts by inhibiting RapK, which regulates the activity of ComA. The chain is RapK inhibitor (phrK) from Bacillus subtilis (strain 168).